The sequence spans 382 residues: MGKSAVLELAEDLISRPSVTPEDAGCQELMIARLKAVGFRVTRLPANGVENFWAERGGAGPRLCFAGHTDVVPSGPLAEWQNDPFQPIIRDGMLYGRGAADMKGSLAAMVVAAERFVALHPAHSGRLAFLITSDEEGIATHGTRHVVDWLREHGETIDWCVVGEPSSEKVLGDVIKNGRRGSLNGRLTVHGIQGHVAYPDKADNPIHRAFRPLADLVDQSWDAGNDFFPPTRLQFSNIHAGTGANNVIPGQLQADFNFRFSTESTPESLQAGVHKILDASAMRYTIDWQLSGPPFFTAPGPLVAATQKALQAVEQRVAQLSTGGGTSDGRFIAQLGGQVVELGPVNATIHKINECVAVADLEHLAQIYMEIMVHLLETANGR.

His68 contributes to the Zn(2+) binding site. Asp70 is a catalytic residue. Asp101 serves as a coordination point for Zn(2+). Glu135 functions as the Proton acceptor in the catalytic mechanism. Glu136, Glu164, and His350 together coordinate Zn(2+).

Belongs to the peptidase M20A family. DapE subfamily. In terms of assembly, homodimer. Zn(2+) serves as cofactor. It depends on Co(2+) as a cofactor.

It carries out the reaction N-succinyl-(2S,6S)-2,6-diaminopimelate + H2O = (2S,6S)-2,6-diaminopimelate + succinate. It functions in the pathway amino-acid biosynthesis; L-lysine biosynthesis via DAP pathway; LL-2,6-diaminopimelate from (S)-tetrahydrodipicolinate (succinylase route): step 3/3. Catalyzes the hydrolysis of N-succinyl-L,L-diaminopimelic acid (SDAP), forming succinate and LL-2,6-diaminopimelate (DAP), an intermediate involved in the bacterial biosynthesis of lysine and meso-diaminopimelic acid, an essential component of bacterial cell walls. The chain is Succinyl-diaminopimelate desuccinylase from Acidithiobacillus ferrooxidans (strain ATCC 23270 / DSM 14882 / CIP 104768 / NCIMB 8455) (Ferrobacillus ferrooxidans (strain ATCC 23270)).